The following is a 401-amino-acid chain: MSERKLFTSESVSEGHPDKIADQISDAILDAILAKDPEAHVAAETCVYTGSVHVFGEISTTAYVDINRVVRDTIAEIGYTEAEYGFSAESVGVHPSLVEQSPDIAQGVNEALEAREGQSDDFNVIGAGDQGLMFGFAIDETPELMPLPISLSHQLVRRLATLRKSGEISYLRPDAKSQVTVEYDEHDKPVRVDTVVISTQHDPEVSNDQIRQDMIEQVIKAVIPAHYLDEKTRFLINPTGRFVIGGPQGDSGLTGRKIIVDTYGGYARHGGGAFSGKDATKVDRSASYAARYIAKNLVAAGLASKAEVQLAYAIGVAQPVSVRVDTFGTSTVSESILEAAVRQVFDLRPAGIIKMLDLKRPIYKQTAAYGHMGRTDIDLPWEHLDKVSPLTEAVAALSEGA.

Histidine 16 is an ATP binding site. Aspartate 18 contributes to the Mg(2+) binding site. Glutamate 44 is a K(+) binding site. Glutamate 57 and glutamine 100 together coordinate L-methionine. Residues 100–110 are flexible loop; the sequence is QSPDIAQGVNE. Residues 174-176, 241-242, aspartate 250, 256-257, alanine 273, and lysine 277 each bind ATP; these read DAK, RF, and RK. Aspartate 250 is an L-methionine binding site. Lysine 281 provides a ligand contact to L-methionine.

It belongs to the AdoMet synthase family. In terms of assembly, homotetramer; dimer of dimers. The cofactor is Mg(2+). K(+) serves as cofactor.

The protein localises to the cytoplasm. The catalysed reaction is L-methionine + ATP + H2O = S-adenosyl-L-methionine + phosphate + diphosphate. The protein operates within amino-acid biosynthesis; S-adenosyl-L-methionine biosynthesis; S-adenosyl-L-methionine from L-methionine: step 1/1. In terms of biological role, catalyzes the formation of S-adenosylmethionine (AdoMet) from methionine and ATP. The overall synthetic reaction is composed of two sequential steps, AdoMet formation and the subsequent tripolyphosphate hydrolysis which occurs prior to release of AdoMet from the enzyme. This Streptococcus equi subsp. zooepidemicus (strain MGCS10565) protein is S-adenosylmethionine synthase.